Here is a 345-residue protein sequence, read N- to C-terminus: Protein RecA (345 aa).

65–72 (GPESSGKT) contributes to the ATP binding site.

This sequence belongs to the RecA family.

Its subcellular location is the cytoplasm. Can catalyze the hydrolysis of ATP in the presence of single-stranded DNA, the ATP-dependent uptake of single-stranded DNA by duplex DNA, and the ATP-dependent hybridization of homologous single-stranded DNAs. It interacts with LexA causing its activation and leading to its autocatalytic cleavage. The sequence is that of Protein RecA from Sulfurimonas denitrificans (strain ATCC 33889 / DSM 1251) (Thiomicrospira denitrificans (strain ATCC 33889 / DSM 1251)).